Here is a 210-residue protein sequence, read N- to C-terminus: Guanylate kinase (210 aa).

In terms of domain architecture, Guanylate kinase-like spans 8 to 188 (GNLFIIAAPS…SLASLEHIVL (181 aa)). 15–22 (APSGAGKS) is an ATP binding site.

The protein belongs to the guanylate kinase family.

It is found in the cytoplasm. The enzyme catalyses GMP + ATP = GDP + ADP. Functionally, essential for recycling GMP and indirectly, cGMP. This is Guanylate kinase from Idiomarina loihiensis (strain ATCC BAA-735 / DSM 15497 / L2-TR).